The sequence spans 199 residues: Probable nicotinate-nucleotide adenylyltransferase (199 aa).

It belongs to the NadD family.

It catalyses the reaction nicotinate beta-D-ribonucleotide + ATP + H(+) = deamido-NAD(+) + diphosphate. It participates in cofactor biosynthesis; NAD(+) biosynthesis; deamido-NAD(+) from nicotinate D-ribonucleotide: step 1/1. Its function is as follows. Catalyzes the reversible adenylation of nicotinate mononucleotide (NaMN) to nicotinic acid adenine dinucleotide (NaAD). The chain is Probable nicotinate-nucleotide adenylyltransferase from Roseobacter denitrificans (strain ATCC 33942 / OCh 114) (Erythrobacter sp. (strain OCh 114)).